Here is a 930-residue protein sequence, read N- to C-terminus: Translation initiation factor IF-2 (930 aa).

The span at 50 to 67 (FKPAAAPKVEAKPAAPKV) shows a compositional bias: low complexity. Disordered stretches follow at residues 50–195 (FKPA…PRID) and 260–346 (EVVP…HELP). Basic and acidic residues-rich tracts occupy residues 68–90 (SAEK…EAKP) and 110–125 (FKAE…AERR). The span at 129 to 141 (KGNNRDQQQNGNR) shows a compositional bias: low complexity. Basic and acidic residues-rich tracts occupy residues 157–167 (RDNRRFNDQAK) and 262–295 (VPEK…DGPR). The span at 309 to 318 (NQKNSNWNNN) shows a compositional bias: low complexity. A compositionally biased stretch (basic and acidic residues) spans 337-346 (VTERKFHELP). The 168-residue stretch at 432-599 (ERPPVVTIMG…TVLLVAEIQE (168 aa)) folds into the tr-type G domain. The interval 441-448 (GHVDHGKT) is G1. 441–448 (GHVDHGKT) is a GTP binding site. The segment at 466-470 (GITQH) is G2. The G3 stretch occupies residues 487–490 (DTPG). GTP contacts are provided by residues 487–491 (DTPGH) and 541–544 (NKID). The G4 stretch occupies residues 541-544 (NKID). The G5 stretch occupies residues 577–579 (SAK).

This sequence belongs to the TRAFAC class translation factor GTPase superfamily. Classic translation factor GTPase family. IF-2 subfamily.

It is found in the cytoplasm. Its function is as follows. One of the essential components for the initiation of protein synthesis. Protects formylmethionyl-tRNA from spontaneous hydrolysis and promotes its binding to the 30S ribosomal subunits. Also involved in the hydrolysis of GTP during the formation of the 70S ribosomal complex. This chain is Translation initiation factor IF-2, found in Streptococcus pneumoniae (strain ATCC BAA-255 / R6).